The sequence spans 297 residues: Ribosomal RNA small subunit methyltransferase A (297 aa).

Residues Asn28, Leu30, Gly55, Glu76, Asp101, and Asn126 each contribute to the S-adenosyl-L-methionine site.

Belongs to the class I-like SAM-binding methyltransferase superfamily. rRNA adenine N(6)-methyltransferase family. RsmA subfamily.

It localises to the cytoplasm. It carries out the reaction adenosine(1518)/adenosine(1519) in 16S rRNA + 4 S-adenosyl-L-methionine = N(6)-dimethyladenosine(1518)/N(6)-dimethyladenosine(1519) in 16S rRNA + 4 S-adenosyl-L-homocysteine + 4 H(+). Its function is as follows. Specifically dimethylates two adjacent adenosines (A1518 and A1519) in the loop of a conserved hairpin near the 3'-end of 16S rRNA in the 30S particle. May play a critical role in biogenesis of 30S subunits. The protein is Ribosomal RNA small subunit methyltransferase A of Latilactobacillus sakei subsp. sakei (strain 23K) (Lactobacillus sakei subsp. sakei).